Consider the following 247-residue polypeptide: TLC domain-containing protein 1 (247 aa).

An N-terminal signal peptide occupies residues 1–27; sequence MPLLLHPAWPLLLGATLTFRALRRVLC. The Extracellular portion of the chain corresponds to 28 to 46; that stretch reads RLPLPAHVQTDPLRTWRWH. A TLC domain is found at 40-234; the sequence is LRTWRWHNLL…LLRSDFCPER (195 aa). The chain crosses the membrane as a helical span at residues 47–67; it reads NLLVSFTHSIVSGIWALLCIW. Topologically, residues 68-83 are cytoplasmic; sequence QTPEMLVEIETAWSVC. The helical transmembrane segment at 84 to 104 threads the bilayer; it reads GYLLVCFSAGYFIHDTVDIVV. The Extracellular segment spans residues 105–123; the sequence is SRQTRASWEYLVHHVMAMG. Positions 124-144 form an intramembrane region, helical; that stretch reads AFFSGIFWKRFVGGGVLTLLV. Residues 145–173 are Extracellular-facing; sequence EVSNIFLTLRMMMKINNAQDILLYKVNKY. A helical transmembrane segment spans residues 174–194; it reads VNLVMYFLFRLAPQAYLTKFF. The Cytoplasmic segment spans residues 195–201; that stretch reads LQYAGQR. A helical membrane pass occupies residues 202–222; it reads TLGTFLLSILLMLDVMILIYF. Residues 223–247 lie on the Extracellular side of the membrane; sequence SRLLRSDFCPERAPSRQQKDKFLTE.

It is found in the cell membrane. In terms of biological role, regulates the composition and fluidity of the plasma membrane. Inhibits the incorporation of membrane-fluidizing phospholipids containing omega-3 long-chain polyunsaturated fatty acids (LCPUFA) and thereby promotes membrane rigidity. Does not appear to have any effect on LCPUFA synthesis. The polypeptide is TLC domain-containing protein 1 (Tlcd1) (Rattus norvegicus (Rat)).